The sequence spans 410 residues: Killer cell immunoglobulin-like receptor 3DL3 (410 aa).

A signal peptide spans Met1 to Gly25. At Gln26–Leu322 the chain is on the extracellular side. 3 Ig-like C2-type domains span residues Gly42 to Ser97, Gly137 to Gly197, and Gly237 to Gly295. Cystine bridges form between Cys49–Cys95 and Cys144–Cys195. Asn179, Asn239, and Asn273 each carry an N-linked (GlcNAc...) asparagine glycan. A disulfide bridge links Cys244 with Cys293. Residues His323–Leu343 traverse the membrane as a helical segment. Topologically, residues His344–Val410 are cytoplasmic.

The protein belongs to the immunoglobulin superfamily.

The protein localises to the cell membrane. Its function is as follows. Receptor on natural killer cells. May inhibit the activity of NK cells thus preventing cell lysis. This Homo sapiens (Human) protein is Killer cell immunoglobulin-like receptor 3DL3 (KIR3DL3).